The chain runs to 700 residues: Tectonic-2 (700 aa).

The first 25 residues, 1 to 25 (MGSLSPLSFLWGLLLLQGVLRPLRG), serve as a signal peptide directing secretion. Topologically, residues 26-665 (DPVFIPPFIR…YYQGEPRPQC (640 aa)) are extracellular. Residues Asn-76, Asn-82, Asn-146, Asn-156, and Asn-389 are each glycosylated (N-linked (GlcNAc...) asparagine). The helical transmembrane segment at 666 to 682 (VAKGLMLLSLLMLAILL) threads the bilayer. The Cytoplasmic segment spans residues 683–700 (RHPWVGMCKAWSSASIQH).

It belongs to the tectonic family. As to quaternary structure, part of the tectonic-like complex (also named B9 complex).

The protein localises to the membrane. It is found in the cytoplasm. Its subcellular location is the cytoskeleton. The protein resides in the cilium basal body. Component of the tectonic-like complex, a complex localized at the transition zone of primary cilia and acting as a barrier that prevents diffusion of transmembrane proteins between the cilia and plasma membranes. Required for hedgehog signaling transduction. In Rattus norvegicus (Rat), this protein is Tectonic-2 (Tctn2).